Here is a 302-residue protein sequence, read N- to C-terminus: tRNA-cytidine(32) 2-sulfurtransferase (302 aa).

The short motif at 43–48 (SGGKDS) is the PP-loop motif element. Residues C118, C121, and C209 each coordinate [4Fe-4S] cluster.

Belongs to the TtcA family. As to quaternary structure, homodimer. Mg(2+) is required as a cofactor. Requires [4Fe-4S] cluster as cofactor.

The protein resides in the cytoplasm. The enzyme catalyses cytidine(32) in tRNA + S-sulfanyl-L-cysteinyl-[cysteine desulfurase] + AH2 + ATP = 2-thiocytidine(32) in tRNA + L-cysteinyl-[cysteine desulfurase] + A + AMP + diphosphate + H(+). It functions in the pathway tRNA modification. Functionally, catalyzes the ATP-dependent 2-thiolation of cytidine in position 32 of tRNA, to form 2-thiocytidine (s(2)C32). The sulfur atoms are provided by the cysteine/cysteine desulfurase (IscS) system. The polypeptide is tRNA-cytidine(32) 2-sulfurtransferase (Polynucleobacter asymbioticus (strain DSM 18221 / CIP 109841 / QLW-P1DMWA-1) (Polynucleobacter necessarius subsp. asymbioticus)).